A 23-amino-acid polypeptide reads, in one-letter code: Glutamine synthetase (23 aa).

It belongs to the glutamine synthetase family. In terms of assembly, oligomer of 12 subunits arranged in the form of two hexagons. Mg(2+) serves as cofactor.

It localises to the cytoplasm. It carries out the reaction L-glutamate + NH4(+) + ATP = L-glutamine + ADP + phosphate + H(+). The activity of this enzyme could be controlled by adenylation under conditions of abundant glutamine. Its function is as follows. Involved in nitrogen metabolism via ammonium assimilation. Catalyzes the ATP-dependent biosynthesis of glutamine from glutamate and ammonia. This is Glutamine synthetase from Phormidium lapideum.